The following is a 117-amino-acid chain: MELDQDVNRIIKSKTATKVSAMQAEIEANHAYIYDVQLKKLLRLHDEELQERCHTPLRKLYAKYSSRAEGNRDLQTWAEHVERDLRLLETTLRLVREGKAQDTEQAPGKGDRIFRSD.

Positions 97-117 are disordered; the sequence is EGKAQDTEQAPGKGDRIFRSD.

The protein belongs to the BLOC1S1 family. In terms of assembly, component of the biogenesis of lysosome-related organelles complex-1 (BLOC-1).

The protein localises to the endosome. In terms of biological role, component of the biogenesis of lysosome-related organelles complex-1 (BLOC-1), a complex involved in endosomal cargo sorting. This Eremothecium gossypii (strain ATCC 10895 / CBS 109.51 / FGSC 9923 / NRRL Y-1056) (Yeast) protein is Biogenesis of lysosome-related organelles complex 1 subunit BLS1 (BLS1).